A 508-amino-acid polypeptide reads, in one-letter code: NADH-quinone oxidoreductase subunit N 2 (508 aa).

14 helical membrane passes run 14–34, 43–63, 90–110, 119–139, 144–164, 179–199, 223–243, 275–295, 298–318, 327–347, 353–373, 400–420, 433–455, and 473–493; these read SYVAILPHLIVTATLLVVIVL, SLVWVTLGGVVLAMLSIWYTA, FTFFMNGVLLGIAALVILLSA, GAHMEFYEIILAVTLGMMFMV, LLTIYIGLELTSISSYVLAGI, FLTGATASAVLLFGLSLIYGV, GPALTPLLVAGMAFLMVGFGF, GAAMAAILRVFVGGLGVAPFT, WALIWALAAAASMTVGNLVAL, MAYSSIAQAGYILVGVAASGL, ISSVLFYVMAYAVTNLGIFAV, AWALLLFFVSLIGIPPTVGFL, GYLWLAVLMAVNSVISVGYYYRV, and TGISATVLLSLLGVVALTIFA.

Belongs to the complex I subunit 2 family. NDH-1 is composed of 14 different subunits. Subunits NuoA, H, J, K, L, M, N constitute the membrane sector of the complex.

It is found in the cell membrane. It catalyses the reaction a quinone + NADH + 5 H(+)(in) = a quinol + NAD(+) + 4 H(+)(out). Its function is as follows. NDH-1 shuttles electrons from NADH, via FMN and iron-sulfur (Fe-S) centers, to quinones in the respiratory chain. The immediate electron acceptor for the enzyme in this species is believed to be a menaquinone. Couples the redox reaction to proton translocation (for every two electrons transferred, four hydrogen ions are translocated across the cytoplasmic membrane), and thus conserves the redox energy in a proton gradient. The polypeptide is NADH-quinone oxidoreductase subunit N 2 (Symbiobacterium thermophilum (strain DSM 24528 / JCM 14929 / IAM 14863 / T)).